Reading from the N-terminus, the 193-residue chain is Potassium-transporting ATPase KdpC subunit (193 aa).

Residues 11–31 (FTLVFMVLLGLVYPFVMTGIA) traverse the membrane as a helical segment.

Belongs to the KdpC family. The system is composed of three essential subunits: KdpA, KdpB and KdpC.

The protein localises to the cell membrane. In terms of biological role, part of the high-affinity ATP-driven potassium transport (or Kdp) system, which catalyzes the hydrolysis of ATP coupled with the electrogenic transport of potassium into the cytoplasm. This subunit acts as a catalytic chaperone that increases the ATP-binding affinity of the ATP-hydrolyzing subunit KdpB by the formation of a transient KdpB/KdpC/ATP ternary complex. The polypeptide is Potassium-transporting ATPase KdpC subunit (Caldanaerobacter subterraneus subsp. tengcongensis (strain DSM 15242 / JCM 11007 / NBRC 100824 / MB4) (Thermoanaerobacter tengcongensis)).